Here is a 475-residue protein sequence, read N- to C-terminus: ATP synthase subunit beta (475 aa).

Position 154–161 (154–161) interacts with ATP; it reads GGAGVGKT.

It belongs to the ATPase alpha/beta chains family. In terms of assembly, F-type ATPases have 2 components, CF(1) - the catalytic core - and CF(0) - the membrane proton channel. CF(1) has five subunits: alpha(3), beta(3), gamma(1), delta(1), epsilon(1). CF(0) has three main subunits: a(1), b(2) and c(9-12). The alpha and beta chains form an alternating ring which encloses part of the gamma chain. CF(1) is attached to CF(0) by a central stalk formed by the gamma and epsilon chains, while a peripheral stalk is formed by the delta and b chains.

It localises to the cell inner membrane. The catalysed reaction is ATP + H2O + 4 H(+)(in) = ADP + phosphate + 5 H(+)(out). Its function is as follows. Produces ATP from ADP in the presence of a proton gradient across the membrane. The catalytic sites are hosted primarily by the beta subunits. In Hyphomonas neptunium (strain ATCC 15444), this protein is ATP synthase subunit beta.